We begin with the raw amino-acid sequence, 163 residues long: Inorganic pyrophosphatase (163 aa).

3 residues coordinate substrate: lysine 21, arginine 35, and tyrosine 47. Positions 57, 62, and 94 each coordinate Mg(2+). Tyrosine 131 provides a ligand contact to substrate.

Belongs to the PPase family. As to quaternary structure, homohexamer. It depends on Mg(2+) as a cofactor.

The protein resides in the cytoplasm. The enzyme catalyses diphosphate + H2O = 2 phosphate + H(+). Catalyzes the hydrolysis of inorganic pyrophosphate (PPi) forming two phosphate ions. This is Inorganic pyrophosphatase from Halalkalibacterium halodurans (strain ATCC BAA-125 / DSM 18197 / FERM 7344 / JCM 9153 / C-125) (Bacillus halodurans).